We begin with the raw amino-acid sequence, 406 residues long: Calsequestrin-2 (406 aa).

The signal sequence occupies residues 1 to 19 (MKATCWILAGFCLLFCCKA). The N-linked (GlcNAc...) asparagine glycan is linked to asparagine 335. The interval 365-406 (VLSGKINTEDDDDDDDDDDDDDDDDDDDDDDDDDDDDDDDDD) is disordered. Positions 373–406 (EDDDDDDDDDDDDDDDDDDDDDDDDDDDDDDDDD) are enriched in acidic residues.

Belongs to the calsequestrin family. As to expression, skeletal and heart muscle.

It is found in the sarcoplasmic reticulum lumen. Calsequestrin is a high-capacity, moderate affinity, calcium-binding protein and thus acts as an internal calcium store in muscle. Calcium ions are bound by clusters of acidic residues at the protein surface, especially at the interface between subunits. Can bind around 60 Ca(2+) ions. Regulates the release of lumenal Ca(2+) via the calcium release channel RYR2; this plays an important role in triggering muscle contraction. Plays a role in excitation-contraction coupling in the heart and in regulating the rate of heart beats. The protein is Calsequestrin-2 (CASQ2) of Gallus gallus (Chicken).